The primary structure comprises 210 residues: Large ribosomal subunit protein uL3 (210 aa).

Residues 134–153 form a disordered region; that stretch reads THGNSLSHRAPGSIGQNQTP. The residue at position 151 (Q151) is an N5-methylglutamine.

Belongs to the universal ribosomal protein uL3 family. Part of the 50S ribosomal subunit. Forms a cluster with proteins L14 and L19. In terms of processing, methylated by PrmB.

Functionally, one of the primary rRNA binding proteins, it binds directly near the 3'-end of the 23S rRNA, where it nucleates assembly of the 50S subunit. This is Large ribosomal subunit protein uL3 from Aeromonas salmonicida (strain A449).